We begin with the raw amino-acid sequence, 178 residues long: Large ribosomal subunit protein uL6 (178 aa).

Belongs to the universal ribosomal protein uL6 family. Part of the 50S ribosomal subunit.

Functionally, this protein binds to the 23S rRNA, and is important in its secondary structure. It is located near the subunit interface in the base of the L7/L12 stalk, and near the tRNA binding site of the peptidyltransferase center. This chain is Large ribosomal subunit protein uL6, found in Campylobacter hominis (strain ATCC BAA-381 / DSM 21671 / CCUG 45161 / LMG 19568 / NCTC 13146 / CH001A).